The chain runs to 890 residues: Translation initiation factor IF-2 (890 aa).

The interval 50–304 is disordered; the sequence is LRQGSPEQEE…LQQEFERPTA (255 aa). Composition is skewed to basic and acidic residues over residues 112–125, 136–147, and 217–262; these read KRSD…RKQE, RALEQEEAKREE, and ALKE…QEAK. A tr-type G domain is found at 390-559; sequence GRAPVVTVMG…VLQAELQELK (170 aa). Positions 399-406 are G1; that stretch reads GHVDHGKT. Residue 399–406 participates in GTP binding; the sequence is GHVDHGKT. Residues 424 to 428 form a G2 region; that stretch reads GITQH. The segment at 445–448 is G3; that stretch reads DTPG. Residues 445-449 and 499-502 each bind GTP; these read DTPGH and NKMD. Residues 499–502 form a G4 region; that stretch reads NKMD. The G5 stretch occupies residues 535–537; sequence SAM.

This sequence belongs to the TRAFAC class translation factor GTPase superfamily. Classic translation factor GTPase family. IF-2 subfamily.

Its subcellular location is the cytoplasm. Its function is as follows. One of the essential components for the initiation of protein synthesis. Protects formylmethionyl-tRNA from spontaneous hydrolysis and promotes its binding to the 30S ribosomal subunits. Also involved in the hydrolysis of GTP during the formation of the 70S ribosomal complex. This is Translation initiation factor IF-2 from Halorhodospira halophila (strain DSM 244 / SL1) (Ectothiorhodospira halophila (strain DSM 244 / SL1)).